The sequence spans 210 residues: Thymidylate kinase (210 aa).

10 to 17 (GLEGAGKT) contacts ATP.

It belongs to the thymidylate kinase family.

It catalyses the reaction dTMP + ATP = dTDP + ADP. Functionally, phosphorylation of dTMP to form dTDP in both de novo and salvage pathways of dTTP synthesis. The chain is Thymidylate kinase from Actinobacillus succinogenes (strain ATCC 55618 / DSM 22257 / CCUG 43843 / 130Z).